A 130-amino-acid polypeptide reads, in one-letter code: Small ribosomal subunit protein eS17 (130 aa).

Residues 74 to 84 are compositionally biased toward basic and acidic residues; it reads QEEERERRDNY. Positions 74–97 are disordered; the sequence is QEEERERRDNYMPEISTVDPSQLT.

Belongs to the eukaryotic ribosomal protein eS17 family.

This Caenorhabditis elegans protein is Small ribosomal subunit protein eS17 (rps-17).